The chain runs to 1003 residues: SWI/SNF-related matrix-associated actin-dependent regulator of chromatin subfamily A containing DEAD/H box 1 (1003 aa).

Disordered stretches follow at residues 15–130 (KKID…SKYK), 172–235 (GSSR…HFPD), and 274–351 (AKKE…EDYS). Basic and acidic residues-rich tracts occupy residues 172–188 (GSSRKRKLDEVPKDSSP), 221–235 (KQEASVKKLQRHFPD), and 274–294 (AKKEVSNGKEFSRSNKNDNKS). Residues 221 to 264 (KQEASVKKLQRHFPDLDKEELREVLQEHDWSFHEALEALKLFAE) form the CUE domain. Low complexity predominate over residues 295-311 (SAKAKANQNSNKAMAQN). A compositionally biased stretch (basic and acidic residues) spans 321–333 (KYSENAKRDTRDL). Residues 486–654 (ALLHKHKVNM…MSLLNFVMPH (169 aa)) form the Helicase ATP-binding domain. 499 to 506 (DEMGLGKT) is an ATP binding site. The DEGH box signature appears at 605 to 608 (DEGH). The Helicase C-terminal domain maps to 835–997 (ILEKLLSDIK…TIPLDMATLL (163 aa)).

Belongs to the SNF2/RAD54 helicase family.

The protein localises to the nucleus. It localises to the chromosome. The enzyme catalyses ATP + H2O = ADP + phosphate + H(+). DNA helicase that possesses intrinsic ATP-dependent nucleosome-remodeling activity and is both required for DNA repair and heterochromatin organization. Promotes DNA end resection of double-strand breaks (DSBs) following DNA damage: probably acts by weakening histone DNA interactions in nucleosomes flanking DSBs. Required for the restoration of heterochromatin organization after replication. The polypeptide is SWI/SNF-related matrix-associated actin-dependent regulator of chromatin subfamily A containing DEAD/H box 1 (smarcad1) (Xenopus tropicalis (Western clawed frog)).